We begin with the raw amino-acid sequence, 177 residues long: Phycoerythrin beta subunit (177 aa).

(2R,3E)-phycoerythrobilin-binding residues include Tyr18, Lys28, Asn35, and Asp39. 15,16-dihydrobiliverdin-binding residues include Cys50, Asp54, and Cys61. (2R,3E)-phycoerythrobilin contacts are provided by Cys82, Arg84, and Asp85. A 15,16-dihydrobiliverdin-binding site is contributed by Arg129. Residue Asn144 participates in (2R,3E)-phycoerythrobilin binding. Positions 148 and 149 each coordinate 15,16-dihydrobiliverdin. The (2R,3E)-phycoerythrobilin site is built by Pro154, Gly156, and Cys158.

The protein belongs to the phycobiliprotein family. Heterotetramer of 2 different alpha chains and 2 identical beta chains which form 2 alpha-beta heterodimers within the heterotetramer. The two alpha-beta heterodimers are rotated to an open configuration in contrast to the closed configuration found in other cryptophyte species due to the insertion of a single amino acid, 'Asp-65', in a conserved region of the alpha chain. In the open form, the central chromophores are not in physical contact but are separated by a water-filled channel. In terms of processing, contains three phycoerythrobilin chromophores and one 15,16-dihydrobiliverdin chromophore with binding of the phycoerythrobilin chromophores mediated by both the alpha and beta subunits.

The protein localises to the plastid. It localises to the chloroplast thylakoid membrane. In terms of biological role, light-harvesting photosynthetic bile pigment-protein from the phycobiliprotein complex. This is Phycoerythrin beta subunit from Hemiselmis andersenii (Cryptophyte alga).